A 284-amino-acid polypeptide reads, in one-letter code: Diaminopimelate epimerase (284 aa).

Substrate is bound by residues Asn-20, Gln-53, and Asn-73. The active-site Proton donor is the Cys-82. Substrate is bound by residues 83–84, Asn-167, Asn-200, and 218–219; these read GN and ER. Cys-227 acts as the Proton acceptor in catalysis. 228–229 serves as a coordination point for substrate; the sequence is GS.

This sequence belongs to the diaminopimelate epimerase family. In terms of assembly, homodimer.

The protein resides in the cytoplasm. The catalysed reaction is (2S,6S)-2,6-diaminopimelate = meso-2,6-diaminopimelate. It functions in the pathway amino-acid biosynthesis; L-lysine biosynthesis via DAP pathway; DL-2,6-diaminopimelate from LL-2,6-diaminopimelate: step 1/1. Its function is as follows. Catalyzes the stereoinversion of LL-2,6-diaminopimelate (L,L-DAP) to meso-diaminopimelate (meso-DAP), a precursor of L-lysine and an essential component of the bacterial peptidoglycan. In Xanthomonas axonopodis pv. citri (strain 306), this protein is Diaminopimelate epimerase.